A 375-amino-acid chain; its full sequence is MLFPALALLCPVLVAAHGQLSWVQVGTGPQYPAWTLDDYYTALYRESDPVWGALPEQKYTRKTDRTDLGFADIFSKSIATGGYEVCKRFDDMSPVGTIPAKAGDQVIVQWSSEWPSEGHPGPIGEWMAKCPNDSCTQVDATTLDWFCIAQHNYDAEIKKWPTEILTESLNRQWIFTLPTDLPPGAYLVRHELIALHNSTGPTPDLVSSPQHYPIGIEIMLDSSGTTLPTLTCKFPGCFSYDDYEWHHNIWDDEWQGLLVKWEFPGIAVYPGGYTTGVVNGASAAVKNGMSSSPSSSSGVSSSSSSSVASSDTSDSTTSSGVVAVNVSAASSPSSSISANSAMATGKKTCKRKKRSKIAGQKRHIHRSRVAHLDRH.

Residues 1–16 (MLFPALALLCPVLVAA) form the signal peptide. Residue histidine 119 coordinates Cu(2+). An intrachain disulfide couples cysteine 130 to cysteine 135. N-linked (GlcNAc...) asparagine glycosylation is present at asparagine 132. Histidine 196 is a binding site for O2. The N-linked (GlcNAc...) asparagine glycan is linked to asparagine 197. Tyrosine 212 is a Cu(2+) binding site. The cysteines at positions 232 and 237 are disulfide-linked. The segment at 287–375 (NGMSSSPSSS…RSRVAHLDRH (89 aa)) is disordered. Positions 290–341 (SSSPSSSSGVSSSSSSSVASSDTSDSTTSSGVVAVNVSAASSPSSSISANSA) are enriched in low complexity. N-linked (GlcNAc...) asparagine glycosylation is present at asparagine 325. Over residues 347–369 (KTCKRKKRSKIAGQKRHIHRSRV) the composition is skewed to basic residues.

The protein belongs to the polysaccharide monooxygenase AA9 family. Cu(2+) is required as a cofactor.

The protein resides in the secreted. It is found in the cell wall. It carries out the reaction [(1-&gt;4)-beta-D-glucosyl]n+m + reduced acceptor + O2 = 4-dehydro-beta-D-glucosyl-[(1-&gt;4)-beta-D-glucosyl]n-1 + [(1-&gt;4)-beta-D-glucosyl]m + acceptor + H2O.. In terms of biological role, lytic polysaccharide monooxygenase (LPMO) that depolymerizes polysaccharides via the oxidation of scissile alpha- or beta-(1-4)-glycosidic bonds, yielding C4 oxidation products. Catalysis by LPMOs requires the reduction of the active-site copper from Cu(II) to Cu(I) by a reducing agent and H(2)O(2) or O(2) as a cosubstrate. Required for the expression of stress response phenotypes, including thermotolerance, cell wall integrity, and efficient cell cycle progression. Promotes intrinsic fungal cell wall remodeling events required for efficient adaptation to the host environment. Required for virulence in a murine inhalational model of cryptococcal infection as well as in Galleria mellonella larvae. The chain is AA9 family lytic polysaccharide monooxygenase CEL1 from Cryptococcus neoformans var. grubii serotype A (strain H99 / ATCC 208821 / CBS 10515 / FGSC 9487) (Filobasidiella neoformans var. grubii).